The chain runs to 381 residues: Lipid-A-disaccharide synthase (381 aa).

It belongs to the LpxB family.

The catalysed reaction is 2-N,3-O-bis[(3R)-3-hydroxytetradecanoyl]-alpha-D-glucosaminyl 1-phosphate + UDP-2-N,3-O-bis[(3R)-3-hydroxytetradecanoyl]-alpha-D-glucosamine = lipid A disaccharide (E. coli) + UDP + H(+). The enzyme catalyses a lipid X + a UDP-2-N,3-O-bis[(3R)-3-hydroxyacyl]-alpha-D-glucosamine = a lipid A disaccharide + UDP + H(+). It participates in glycolipid biosynthesis; lipid IV(A) biosynthesis; lipid IV(A) from (3R)-3-hydroxytetradecanoyl-[acyl-carrier-protein] and UDP-N-acetyl-alpha-D-glucosamine: step 5/6. In terms of biological role, condensation of UDP-2,3-diacylglucosamine and 2,3-diacylglucosamine-1-phosphate to form lipid A disaccharide, a precursor of lipid A, a phosphorylated glycolipid that anchors the lipopolysaccharide to the outer membrane of the cell. The protein is Lipid-A-disaccharide synthase of Erwinia tasmaniensis (strain DSM 17950 / CFBP 7177 / CIP 109463 / NCPPB 4357 / Et1/99).